We begin with the raw amino-acid sequence, 297 residues long: MSEAEQLIAKADKKCAPVSGFASFFSGSGSYRFEEAADLYTQAANLYRIQRKSNKAGHVFEKAADAQIKADSKDEAANSLIEAYKCYKLDAPSDAARCLNKAVEFFALKGQFRRGANFKAELAELYETKMADPKHAILAYEEAGEWYRGDSAEALANKCYVKAADLSCSDEVQDFLKAAESYERIAKESLNNSLAKWSLKDYFFKAILCRLALNDYPSASALLERFVSWDPTFEKTREYEFALKLVDGLKEGDPDIIASASHEYDQISRLDNFKVKILNKIKNNIRDSDDLAEDDLT.

Belongs to the SNAP family.

The protein localises to the membrane. In terms of biological role, required for vesicular transport between the endoplasmic reticulum and the Golgi apparatus. This is Vesicular-fusion protein SEC17 (SEC17) from Komagataella phaffii (strain GS115 / ATCC 20864) (Yeast).